The sequence spans 71 residues: Long neurotoxin Tx-NM3-1 (71 aa).

5 cysteine pairs are disulfide-bonded: C3–C20, C14–C41, C26–C30, C45–C56, and C57–C62.

As to expression, expressed by the venom gland.

Its subcellular location is the secreted. Functionally, binds with high affinity to muscular (alpha-1-beta-1-gamma-delta/CHRNA1-CHRNB1-CHRNG-CHRND) and neuronal (alpha-7/CHRNA7) nicotinic acetylcholine receptor (nAChR) and inhibits acetylcholine from binding to the receptor, thereby impairing neuromuscular and neuronal transmission. Ranges of nAChR inhibition are in nanomolar (competitive binding with alpha-bungarotoxin gives Ki=1.66 nM on muscle nAChR and Ki=4.84 nM on alpha-7). Also shows moderate inhibition on GABA(A) alpha-1-beta-3-gamma-2 receptor (GABRA1-GABRB3-GABRG2) (IC(50)=0.68 uM), and a lower inhibition on alpha-1-beta-2-gamma-2 (GABRA1-GABRB2-GABRG2) and alpha-3-beta-2-gamma-2 (GABRA3-GABRB2-GABRG2). The protein is Long neurotoxin Tx-NM3-1 of Naja melanoleuca (Forest cobra).